A 541-amino-acid chain; its full sequence is Multidrug transporter protein MdtP (541 aa).

14 consecutive transmembrane segments (helical) span residues 14-34, 40-60, 79-99, 112-132, 141-161, 168-188, 201-221, 229-249, 273-293, 307-327, 329-349, 359-379, 401-420, and 492-512; these read LLIT…TIVG, IVGD…YLLT, IVYV…GMAN, GIGG…LFTG, VFGA…GWIV, WVFY…ARGL, IAGI…LSFG, SWQI…FIIV, LIGF…PFFM, IMTP…QLVY, IGIK…FLLL, LVAT…MPIL, FFRS…VMNA, and LHSV…FTLF.

Belongs to the major facilitator superfamily. EmrB family.

It localises to the cell membrane. Functionally, multidrug efflux transporter. Contributes to resistance to several antibiotics, including fusidic acid, novobiocin, streptomycin and actinomycin, possibly by pumping these structurally unrelated antibiotics out of cells. The polypeptide is Multidrug transporter protein MdtP (Bacillus subtilis (strain 168)).